The chain runs to 209 residues: Kynurenine formamidase (209 aa).

W18 is a binding site for substrate. Zn(2+)-binding residues include H48, H52, and D54. H58 acts as the Proton donor/acceptor in catalysis. Residues H160 and E172 each coordinate Zn(2+).

This sequence belongs to the Cyclase 1 superfamily. KynB family. As to quaternary structure, homodimer. Zn(2+) is required as a cofactor.

It catalyses the reaction N-formyl-L-kynurenine + H2O = L-kynurenine + formate + H(+). It functions in the pathway amino-acid degradation; L-tryptophan degradation via kynurenine pathway; L-kynurenine from L-tryptophan: step 2/2. Catalyzes the hydrolysis of N-formyl-L-kynurenine to L-kynurenine, the second step in the kynurenine pathway of tryptophan degradation. In Maricaulis maris (strain MCS10) (Caulobacter maris), this protein is Kynurenine formamidase.